The following is a 711-amino-acid chain: Angiogenic factor with G patch and FHA domains 1 (711 aa).

Residues 1-19 (MASEAPSPPSPSPPPPASP) are compositionally biased toward pro residues. 4 disordered regions span residues 1-23 (MASE…EPEL), 137-184 (ALDP…EGPA), 260-297 (PYQT…SEDQ), and 311-400 (EHSG…EDEE). An N-acetylalanine modification is found at A2. Phosphoserine is present on residues S7 and S12. Residues 19 to 85 (PEPELAQLRR…SKILHCGKNE (67 aa)) are a coiled coil. Over residues 167-176 (AVTSDSQESV) the composition is skewed to polar residues. Basic residues predominate over residues 270-279 (RERRLKKRRK). Residues 287-297 (NEEKDLSSEDQ) show a composition bias toward basic and acidic residues. The residue at position 344 (S344) is a Phosphoserine. The segment covering 361-370 (SESEPEEGEI) has biased composition (acidic residues). Residues 374-391 (QSEKSYDGDSSSGDRETS) show a composition bias toward basic and acidic residues. An FHA domain is found at 431-484 (ATIGREKDMEHTVRIPEVAVSKFHAEVYFDHDLQSYVLVDQGSQNGTIVNGKQI). 2 stretches are compositionally biased toward basic and acidic residues: residues 579-606 (LKNP…RDDA) and 613-623 (EITDSNKGRKM). The segment at 579–623 (LKNPKYKDRAGKRREQVGSEGTFQRDDAPASVHSEITDSNKGRKM) is disordered. In terms of domain architecture, G-patch spans 616–662 (DSNKGRKMLEKMGWKRGEGLGKDGGGMKTPIQLQLRRTHAGLGTGKL). K661 carries the post-translational modification N6-acetyllysine. A compositionally biased stretch (basic and acidic residues) spans 690–699 (FTENKPRKET). A disordered region spans residues 690-711 (FTENKPRKETPGAVPWVTGTAE).

In terms of assembly, interacts with the secreted angiogenic factor TNFSF12.

It is found in the cytoplasm. It localises to the secreted. In terms of biological role, promotes angiogenesis and the proliferation of endothelial cells. Able to bind to endothelial cells and promote cell proliferation, suggesting that it may act in an autocrine fashion. The protein is Angiogenic factor with G patch and FHA domains 1 (Aggf1) of Mus musculus (Mouse).